A 150-amino-acid polypeptide reads, in one-letter code: uncharacterized protein (150 aa).

A helical transmembrane segment spans residues 19–39; the sequence is SLGMCVILIDGLIVLTAAFVF.

The protein to B.subtilis YpjC, YqfU and YitT.

It is found in the cell membrane. This is an uncharacterized protein from Bacillus sp. (strain PS3).